A 147-amino-acid chain; its full sequence is Prefoldin subunit alpha (147 aa).

The protein belongs to the prefoldin alpha subunit family. Heterohexamer of two alpha and four beta subunits.

It localises to the cytoplasm. In terms of biological role, molecular chaperone capable of stabilizing a range of proteins. Seems to fulfill an ATP-independent, HSP70-like function in archaeal de novo protein folding. The protein is Prefoldin subunit alpha of Saccharolobus islandicus (strain Y.N.15.51 / Yellowstone #2) (Sulfolobus islandicus).